Here is a 103-residue protein sequence, read N- to C-terminus: Large ribosomal subunit protein eL14 (103 aa).

Belongs to the eukaryotic ribosomal protein eL14 family.

This chain is Large ribosomal subunit protein eL14, found in Pyrobaculum calidifontis (strain DSM 21063 / JCM 11548 / VA1).